A 153-amino-acid polypeptide reads, in one-letter code: Large ribosomal subunit protein uL23m (153 aa).

The interval isoleucine 110–leucine 153 is disordered. The segment covering phenylalanine 111 to glycine 146 has biased composition (basic and acidic residues).

It belongs to the universal ribosomal protein uL23 family. In terms of assembly, component of the mitochondrial ribosome large subunit (39S) which comprises a 16S rRNA and about 50 distinct proteins.

It localises to the mitochondrion. This Danio rerio (Zebrafish) protein is Large ribosomal subunit protein uL23m (mrpl23).